Reading from the N-terminus, the 192-residue chain is Large ribosomal subunit protein uL5 (192 aa).

Belongs to the universal ribosomal protein uL5 family. Part of the 50S ribosomal subunit; part of the 5S rRNA/L5/L18/L25 subcomplex. Contacts the 5S rRNA and the P site tRNA. Forms a bridge to the 30S subunit in the 70S ribosome.

This is one of the proteins that bind and probably mediate the attachment of the 5S RNA into the large ribosomal subunit, where it forms part of the central protuberance. In the 70S ribosome it contacts protein S13 of the 30S subunit (bridge B1b), connecting the 2 subunits; this bridge is implicated in subunit movement. Contacts the P site tRNA; the 5S rRNA and some of its associated proteins might help stabilize positioning of ribosome-bound tRNAs. The sequence is that of Large ribosomal subunit protein uL5 from Paenarthrobacter aurescens (strain TC1).